Reading from the N-terminus, the 516-residue chain is L-amino acid oxidase (516 aa).

Residues 1–18 (MNVFFMFSLLFLAALESC) form the signal peptide. FAD contacts are provided by residues 61–62 (MS), 81–82 (EA), Arg-89, and 105–108 (GPMR). Arg-108 provides a ligand contact to substrate. Asn-190 is a glycosylation site (N-linked (GlcNAc...) asparagine). FAD is bound at residue Val-279. Asn-299 and Asn-404 each carry an N-linked (GlcNAc...) asparagine glycan. A disulfide bridge links Cys-349 with Cys-430. Residues Glu-475 and 482 to 487 (GWIDST) contribute to the FAD site. 482-483 (GW) provides a ligand contact to substrate.

The protein belongs to the flavin monoamine oxidase family. FIG1 subfamily. As to quaternary structure, homodimer; non-covalently linked. The cofactor is FAD. In terms of processing, N-glycosylated (14%). The enzymatic activity remains unchanged after deglycosylation. In terms of tissue distribution, expressed by the venom gland.

It localises to the secreted. The enzyme catalyses an L-alpha-amino acid + O2 + H2O = a 2-oxocarboxylate + H2O2 + NH4(+). It catalyses the reaction L-leucine + O2 + H2O = 4-methyl-2-oxopentanoate + H2O2 + NH4(+). The catalysed reaction is L-phenylalanine + O2 + H2O = 3-phenylpyruvate + H2O2 + NH4(+). It carries out the reaction L-tryptophan + O2 + H2O = indole-3-pyruvate + H2O2 + NH4(+). The enzyme catalyses L-methionine + O2 + H2O = 4-methylsulfanyl-2-oxobutanoate + H2O2 + NH4(+). It catalyses the reaction L-isoleucine + O2 + H2O = (S)-3-methyl-2-oxopentanoate + H2O2 + NH4(+). Its activity is regulated as follows. Inhibited by the substrate analog N-acetyl tryptophan. Its function is as follows. Catalyzes an oxidative deamination of predominantly hydrophobic and aromatic L-amino acids, thus producing hydrogen peroxide that may contribute to the diverse toxic effects of this enzyme. Is highly active on L-Met&gt;L-Leu&gt;L-Phe&gt;L-Trp=L-Ile. Binds to the cell surface and enables the production of highly localized concentration of hydrogen peroxide in or near the binding interfaces. Does not bind to phospholipids. Induces platelet-rich plasma aggregation, shows cytotoxic effects on some cancer cell lines (B16-F10 (mouse melanoma), PC12 (rat pheochromocytoma), MCF-7 and MDA-MB-231 (human breast carcinoma)) and shows antibacterial activities against both Gram-positive and Gram-negative bacteria. Also exhibits hemorrhage and edema. Does not show cytotoxicity on erythrocytes and peripheral blood mononuclear cells. Its effect on platelets is controversial, since it either induces aggregation or inhibits agonist-induced aggregation. These different effects are probably due to different experimental conditions. The protein is L-amino acid oxidase of Cerastes cerastes (Horned desert viper).